A 207-amino-acid chain; its full sequence is Small ribosomal subunit protein uS7y (207 aa).

The residue at position 2 (Ala-2) is an N-acetylalanine.

The protein belongs to the universal ribosomal protein uS7 family. In terms of tissue distribution, expressed in root tips, lateral root primordia, leaf primordia, shoot apical meristem and vasculature of cotyledons.

The sequence is that of Small ribosomal subunit protein uS7y from Arabidopsis thaliana (Mouse-ear cress).